A 662-amino-acid chain; its full sequence is MLQRDAVIDVDESEIPPIPFVLAFNDLTYNVTLQQRFGLRFGHSPAKIKTLLNGITGEAKEGEILAILGASGAGKSTLIDALAGQIAEGSLKGTVTLNGEALQSRLLRVISAYVMQEDLLFPMLTVEETLMFAAEFRLPRSLSKSKKRNRVETLIDQLGLTTVKNTVIGDEGHRGVSGGERRRVSIGTDIIHDPIVLFLDEPTSGLDSTSAFMVVQVLKKIARSGSIVIMSIHQPSGRIMEFLDRVIVLSSGQIVFSDSPATLPLFFSEFGSPIPEKENIAEFTLDLIKDLEGSPEGTRGLVEFNRNWQHRKLRVSQEPHHNSSSLGEAINASISRGKLVSTSYRSIPSYVNPWWVETVILAKRYMINWTRTPELIGTRVFIVMMTGFLLATVYWKVDDSPRGVQERLSFFSFAMATMFYSCADGLPAFIQERYIFLRETAHNAYRRSSYVISHSLVTLPHLFALSIGFAATTFWFVGLNGGLAGFIYYLMIIFASFWSGCSFVTFVSGVIPNVMMSYMVTFGYLSYCLLFSGFYVNRDRIHLYWIWIHYISLLKYPYEAVLHNEFDDPSRCFVRGNQVFDNTIMEGVSETTKAKLLETMSGYLGMELTESTCLTTGSDLLKQHGIEQLDKWGCLWVTLAWGFFFRILFYFSLLLGSKNKRA.

An ABC transporter domain is found at 22–276 (LAFNDLTYNV…FSEFGSPIPE (255 aa)). Residue 69–76 (GASGAGKS) coordinates ATP. The region spanning 356-566 (VETVILAKRY…PYEAVLHNEF (211 aa)) is the ABC transmembrane type-2 domain. A run of 6 helical transmembrane segments spans residues 375 to 395 (LIGT…TVYW), 410 to 430 (FFSF…PAFI), 451 to 471 (VISH…GFAA), 486 to 508 (FIYY…TFVS), 514 to 536 (VMMS…GFYV), and 635 to 655 (LWVT…SLLL).

Belongs to the ABC transporter superfamily. ABCG family. Eye pigment precursor importer (TC 3.A.1.204) subfamily.

It localises to the membrane. The protein is ABC transporter G family member 17 (ABCG17) of Arabidopsis thaliana (Mouse-ear cress).